The following is an 88-amino-acid chain: Elongation factor 1-beta (88 aa).

The protein belongs to the EF-1-beta/EF-1-delta family.

Promotes the exchange of GDP for GTP in EF-1-alpha/GDP, thus allowing the regeneration of EF-1-alpha/GTP that could then be used to form the ternary complex EF-1-alpha/GTP/AAtRNA. This is Elongation factor 1-beta from Natronomonas pharaonis (strain ATCC 35678 / DSM 2160 / CIP 103997 / JCM 8858 / NBRC 14720 / NCIMB 2260 / Gabara) (Halobacterium pharaonis).